We begin with the raw amino-acid sequence, 2273 residues long: Linear gramicidin synthase subunit A (2273 aa).

A GART region spans residues 1 to 144; that stretch reads MRILFLTTFM…AIEELFIREW (144 aa). 2 Carrier domains span residues 693 to 767 and 1724 to 1798; these read APTD…TEQK and APRT…TSEQ. An O-(pantetheine 4'-phosphoryl)serine mark is found at serine 728 and serine 1759.

The protein belongs to the ATP-dependent AMP-binding enzyme family. As to quaternary structure, large multienzyme complex composed of 4 subunits; LgrA, LgrB, LgrC and LgrD. Pantetheine 4'-phosphate serves as cofactor.

Activates valine (or leucine, but much less frequently), and then glycine and catalyzes the formation of the peptide bond in the first step of peptide synthesis. This enzyme may also play a role in N-formylation of the first amino acid residue in the synthesized dipeptide. In Brevibacillus parabrevis, this protein is Linear gramicidin synthase subunit A (lgrA).